Here is a 341-residue protein sequence, read N- to C-terminus: MKTLAKLHAEKGIWMTDVPHPDCGHNDVVIKISKTAICGTDMHIYQWDDWAQNTIPVPMTVGHEFVGVITEVGPEVSGFKIGDRVSGEGHITCGHCRNCRAGRRHLCRKTLGVGVNRTGAFAEYLVIPASNAFKIPNNISDDMAAIFDPFGNATHTALSFDLIGEDVLITGAGPIGAMAAAIAKHVGARNVVITDVNDFRLDLAKKMGATRTVNVSRESLKDVMTEIDMHEGFDVGLEMSGNDMAFRSMLECMNHGGKIAMLGIPGKDTLIDWNQVIFKGLIIKGIYGREMYETWYKMVAMLQSGLDISPIITHRFKVDEFQQGFDTMGSGLSGKVILDWN.

C38 contacts Zn(2+). Catalysis depends on charge relay system residues T40 and H43. 6 residues coordinate Zn(2+): H63, E64, C93, C96, C99, and C107. NAD(+) contacts are provided by residues I175, D195, R200, 262–264 (LGI), and 286–287 (IY).

Belongs to the zinc-containing alcohol dehydrogenase family. In terms of assembly, homotetramer. The cofactor is Zn(2+).

The protein resides in the cytoplasm. The enzyme catalyses L-threonine + NAD(+) = (2S)-2-amino-3-oxobutanoate + NADH + H(+). It functions in the pathway amino-acid degradation; L-threonine degradation via oxydo-reductase pathway; glycine from L-threonine: step 1/2. Functionally, catalyzes the NAD(+)-dependent oxidation of L-threonine to 2-amino-3-ketobutyrate. This chain is L-threonine 3-dehydrogenase, found in Marinomonas sp. (strain MWYL1).